The following is a 696-amino-acid chain: Equisetin cluster transcription factor eqxF (696 aa).

2 disordered regions span residues 1-24 and 73-117; these read MADQVQDVHPMEWGPGKTPQGRAR and NQEQ…PADY.

It localises to the nucleus. In terms of biological role, transcription factor that regulates the expression of the gene cluster that mediates the biosynthesis of Equisetin. In Fusarium heterosporum, this protein is Equisetin cluster transcription factor eqxF.